The primary structure comprises 725 residues: IML2-like protein YKR018C (725 aa).

Thr196 carries the phosphothreonine modification. A phosphoserine mark is found at Ser246, Ser377, and Ser380.

It belongs to the IML2 family.

It localises to the cytoplasm. The protein localises to the nucleus. This Saccharomyces cerevisiae (strain ATCC 204508 / S288c) (Baker's yeast) protein is IML2-like protein YKR018C.